A 1789-amino-acid polypeptide reads, in one-letter code: Protein sprint (1789 aa).

Disordered regions lie at residues 53–120, 140–190, 218–237, 261–317, 329–378, and 401–460; these read TTAN…AHPP, TTTA…DLAN, PLWNARNGNGSTTTHCHPTG, QRMH…QAGL, LNNN…DADD, and RRSR…PCDL. The segment covering 82-114 has biased composition (low complexity); it reads SINNNKNNNISNKNNNNNNNNNNNINNNNNNNN. Residues 140–149 show a composition bias toward polar residues; it reads TTTANQLQQQ. Positions 176-185 are enriched in acidic residues; the sequence is PSEEDGDTDA. A compositionally biased stretch (polar residues) spans 223 to 233; it reads RNGNGSTTTHC. A compositionally biased stretch (low complexity) spans 295–317; it reads NNNNINNNHNGQQSQKSQQQAGL. Polar residues predominate over residues 337-361; that stretch reads QPGSMTPASNRTGLDSNQNQKQNLN. The span at 409–418 shows a compositional bias: low complexity; that stretch reads QSRTSLVSSS. The segment covering 428–445 has biased composition (acidic residues); it reads TSSEDDEEEPVEAEDEGE. The SH2 domain occupies 473 to 566; sequence WFLPGIQRSG…ELPVQLMLPR (94 aa). 7 disordered regions span residues 632-689, 744-787, 852-918, 969-1006, 1040-1067, 1094-1123, and 1138-1160; these read FFSD…SGGQ, TAPE…SANG, GECK…ILES, DLLAETPSTPTPTQQSHLTPCEEETTATPNESSSQSLL, AAEDDGGDTTPTAEGQANGASRSKQGSP, RSQMLHASQRHSEPLKAGFGGSGNGAMLQP, and PKPKVSQQQQQSQQQQQPTKRAR. The segment covering 639–649 has biased composition (pro residues); that stretch reads KPPPTGAPPLP. Positions 671-686 are enriched in low complexity; sequence TPSDTTNSSLSSFTTS. The span at 857 to 868 shows a compositional bias: polar residues; that stretch reads TLSSQGSSSNDS. Residues 903-914 are compositionally biased toward basic and acidic residues; the sequence is AGKESQHYKESD. The span at 974-984 shows a compositional bias: low complexity; that stretch reads TPSTPTPTQQS. Composition is skewed to polar residues over residues 994 to 1006 and 1048 to 1065; these read TATPNESSSQSLL and TTPTAEGQANGASRSKQG. The span at 1143–1154 shows a compositional bias: low complexity; it reads SQQQQQSQQQQQ. One can recognise a VPS9 domain in the interval 1531–1673; it reads RSEDIQLLAQ…LKTFMASEGE (143 aa). The region spanning 1689–1777 is the Ras-associating domain; sequence CSSVLRVIIP…CMLAYKRIDA (89 aa).

It belongs to the RIN (Ras interaction/interference) family. In late cellular blastoderm embryos, it is expressed in the posterior end. Then, as development proceeds, it is expressed in the developing midgut, amnioserosa and in a specific subset of CNS neurons. Isoform 1 is expressed earlier in developing midgut and amnioserosa, but is not expressed in the CNS.

Functionally, potential Ras effector protein. May function as a guanine nucleotide exchange (GEF), by exchanging bound GDP for free GTP. The protein is Protein sprint (spri) of Drosophila melanogaster (Fruit fly).